We begin with the raw amino-acid sequence, 254 residues long: Small ribosomal subunit protein uS2 (254 aa).

A compositionally biased stretch (basic and acidic residues) spans 228-248 (RKERKGQDAEEELKKASEPKA). Positions 228-254 (RKERKGQDAEEELKKASEPKAAEAAAE) are disordered.

It belongs to the universal ribosomal protein uS2 family.

The sequence is that of Small ribosomal subunit protein uS2 from Nitratidesulfovibrio vulgaris (strain ATCC 29579 / DSM 644 / CCUG 34227 / NCIMB 8303 / VKM B-1760 / Hildenborough) (Desulfovibrio vulgaris).